The sequence spans 314 residues: MSGRDISVAIQYPGSRVNRITYPLSKTNIEYEVSADNPFDFDIVLLDCPGLNVLKPLAKAKFSSVPVVYRVQGDVLRAFQEMNYTNFKYRSAKYLFSHLDGAIPIEPVLGRRFSNVTGVRNIGTATLAKSEKYWPNAKHWDESLRLISVTNVNYIGKVQPMVDYAPYISRFLQRNGGHWNIYGKGRLAGYLQDNLGGYDNISYCGYAEDIKSRYANSNCMLHLSNFDSLPNAILEGFASNLPVITNPFSVFSDYHGPIEVTELKKIDAKLCSMQDPTTRRIKARQGQEYLKAKHTPEIVGEQYSVVFRSVLNDC.

This sequence belongs to the glycosyltransferase group 1 family.

This chain is Putative glycosyltransferase ORF31, found in Haloarcula hispanica (His1V).